Here is a 1232-residue protein sequence, read N- to C-terminus: DNA topoisomerase 2 (1232 aa).

ATP is bound by residues Asn65, Asn94, 122 to 124 (SSN), 135 to 142 (GRHGYGAK), and 352 to 354 (QNK). The Toprim domain occupies 432–546 (RTLIVTEGDS…SLLNRNPGFI (115 aa)). Glu438, Asp515, and Asp517 together coordinate Mg(2+). Residues 681-1097 (LAHAVDGLKP…APVQMWLDEL (417 aa)) form the Topo IIA-type catalytic domain. Tyr771 functions as the O-(5'-phospho-DNA)-tyrosine intermediate in the catalytic mechanism. The segment at 952-961 (SLTQRIYING) is interaction with DNA. Positions 1161–1184 (YVPPPPSKRPHVGQSVGGGGGGGS) are disordered. Positions 1175 to 1184 (SVGGGGGGGS) are enriched in gly residues.

The protein belongs to the type II topoisomerase family. Homodimer. It depends on Mg(2+) as a cofactor. Mn(2+) is required as a cofactor. Ca(2+) serves as cofactor.

Its subcellular location is the nucleus. The enzyme catalyses ATP-dependent breakage, passage and rejoining of double-stranded DNA.. Functionally, control of topological states of DNA by transient breakage and subsequent rejoining of DNA strands. Topoisomerase II makes double-strand breaks. The chain is DNA topoisomerase 2 (TOP2) from Trypanosoma cruzi.